A 160-amino-acid chain; its full sequence is Epithelial membrane protein 1 (160 aa).

A helical transmembrane segment spans residues Met1–Val21. An N-linked (GlcNAc...) asparagine glycan is attached at Asn43. The next 3 membrane-spanning stretches (helical) occupy residues Phe67–Phe87, Phe95–Ile115, and Phe137–Leu157.

The protein belongs to the PMP-22/EMP/MP20 family. As to expression, most prominently found in the gastrointestinal tract, skin, lung, and brain but not in liver.

Its subcellular location is the membrane. This is Epithelial membrane protein 1 (Emp1) from Rattus norvegicus (Rat).